Here is a 567-residue protein sequence, read N- to C-terminus: 2-succinyl-5-enolpyruvyl-6-hydroxy-3-cyclohexene-1-carboxylate synthase (567 aa).

It belongs to the TPP enzyme family. MenD subfamily. In terms of assembly, homodimer. Mg(2+) serves as cofactor. Requires Mn(2+) as cofactor. It depends on thiamine diphosphate as a cofactor.

The catalysed reaction is isochorismate + 2-oxoglutarate + H(+) = 5-enolpyruvoyl-6-hydroxy-2-succinyl-cyclohex-3-ene-1-carboxylate + CO2. The protein operates within quinol/quinone metabolism; 1,4-dihydroxy-2-naphthoate biosynthesis; 1,4-dihydroxy-2-naphthoate from chorismate: step 2/7. Its pathway is quinol/quinone metabolism; menaquinone biosynthesis. Functionally, catalyzes the thiamine diphosphate-dependent decarboxylation of 2-oxoglutarate and the subsequent addition of the resulting succinic semialdehyde-thiamine pyrophosphate anion to isochorismate to yield 2-succinyl-5-enolpyruvyl-6-hydroxy-3-cyclohexene-1-carboxylate (SEPHCHC). The protein is 2-succinyl-5-enolpyruvyl-6-hydroxy-3-cyclohexene-1-carboxylate synthase of Yersinia pseudotuberculosis serotype I (strain IP32953).